We begin with the raw amino-acid sequence, 151 residues long: Nucleoside diphosphate kinase (151 aa).

ATP is bound by residues Lys-11, Phe-59, Arg-87, Thr-93, Arg-104, and Asn-114. His-117 functions as the Pros-phosphohistidine intermediate in the catalytic mechanism.

Belongs to the NDK family. Homohexamer. The cofactor is Mg(2+).

The catalysed reaction is a 2'-deoxyribonucleoside 5'-diphosphate + ATP = a 2'-deoxyribonucleoside 5'-triphosphate + ADP. The enzyme catalyses a ribonucleoside 5'-diphosphate + ATP = a ribonucleoside 5'-triphosphate + ADP. In terms of biological role, major role in the synthesis of nucleoside triphosphates other than ATP. The ATP gamma phosphate is transferred to the NDP beta phosphate via a ping-pong mechanism, using a phosphorylated active-site intermediate. In Ginglymostoma cirratum (Nurse shark), this protein is Nucleoside diphosphate kinase.